We begin with the raw amino-acid sequence, 93 residues long: DNA/RNA-binding protein Alba (93 aa).

N6-acetyllysine is present on Lys-11.

This sequence belongs to the histone-like Alba family. In terms of processing, acetylated. Acetylation at Lys-11 decreases DNA-binding affinity.

It localises to the cytoplasm. The protein localises to the chromosome. Its function is as follows. Binds double-stranded DNA tightly but without sequence specificity. Involved in DNA compaction. The sequence is that of DNA/RNA-binding protein Alba from Pyrococcus furiosus (strain ATCC 43587 / DSM 3638 / JCM 8422 / Vc1).